We begin with the raw amino-acid sequence, 245 residues long: MDMAWQMMQLLLLALVTAAGSAQPRSARARTDLLNVCMNAKHHKTQPSPEDELYGQCSPWKKNACCTASTSQELHKDTSRLYNFNWDHCGKMEPTCKRHFIQDSCLYECSPNLGPWIRQVNQSWRKERILNVPLCKEDCERWWEDCRTSYTCKSNWHKGWNWTSGINECPAGALCSTFESYFPTPAALCEGLWSHSFKVSNYSRGSGRCIQMWFDSAQGNPNEEVAKFYAAAMNAGAPSRGIIDS.

Residues 1–22 (MDMAWQMMQLLLLALVTAAGSA) form the signal peptide. 8 cysteine pairs are disulfide-bonded: Cys37-Cys65, Cys57-Cys105, Cys66-Cys109, Cys89-Cys175, Cys96-Cys146, Cys135-Cys209, Cys139-Cys189, and Cys152-Cys169. Folate is bound by residues Asp103 and Tyr107. Asn121 is a glycosylation site (N-linked (GlcNAc...) asparagine). Folate is bound by residues 124–128 (WRKER), 157–162 (HKGWNW), and Ser196. N-linked (GlcNAc...) asparagine glycosylation occurs at Asn161. Asn201 is a glycosylation site (N-linked (GlcNAc...) asparagine).

This sequence belongs to the folate receptor family. As to expression, spleen, thymus, bone marrow, ovarian carcinoma, and uterine carcinoma.

The protein resides in the secreted. Its function is as follows. Binds to folate and reduced folic acid derivatives and mediates delivery of 5-methyltetrahydrofolate to the interior of cells. Isoform Short does not bind folate. This is Folate receptor gamma (FOLR3) from Homo sapiens (Human).